Here is a 262-residue protein sequence, read N- to C-terminus: MKKFIILLSLLILLPLTAASKPLIPIMKTLFTDVTGTVPDAEEIAHKAELFRQQTGIAPFIVVLPDINNEASLRQNGKAMLAHASSSLSDVKGSVLLLFTTREPRLIMITNGQVESGLDDKHLGLLIENHTLAYLNADLWYQGINNALAVLQAQILKQSTPPLTYYPHPGQQHENAPPGSTNTLGFIAWAATFILFSRIFYYTTRFIYALKFAVAMTIANMGYQALCLYIDNSFAITRISPLWAGLIGVCTFIAALLLTSKR.

Over 1 to 4 (MKKF) the chain is Cytoplasmic. Residues 5–27 (IILLSLLILLPLTAASKPLIPIM) traverse the membrane as a helical segment. Residues 28–182 (KTLFTDVTGT…HENAPPGSTN (155 aa)) lie on the Periplasmic side of the membrane. A helical transmembrane segment spans residues 183-202 (TLGFIAWAATFILFSRIFYY). The Cytoplasmic segment spans residues 203-206 (TTRF). The chain crosses the membrane as a helical span at residues 207 to 229 (IYALKFAVAMTIANMGYQALCLY). Residues 230–238 (IDNSFAITR) lie on the Periplasmic side of the membrane. A helical membrane pass occupies residues 239–258 (ISPLWAGLIGVCTFIAALLL). Over 259–262 (TSKR) the chain is Cytoplasmic.

The protein resides in the cell inner membrane. The protein is Inner membrane protein YcfZ (ycfZ) of Escherichia coli (strain K12).